A 156-amino-acid polypeptide reads, in one-letter code: ATP synthase subunit b (156 aa).

Residues 7-29 traverse the membrane as a helical segment; the sequence is LFGQTIAFAIFVWFCMKFVWPPL.

This sequence belongs to the ATPase B chain family. In terms of assembly, F-type ATPases have 2 components, F(1) - the catalytic core - and F(0) - the membrane proton channel. F(1) has five subunits: alpha(3), beta(3), gamma(1), delta(1), epsilon(1). F(0) has three main subunits: a(1), b(2) and c(10-14). The alpha and beta chains form an alternating ring which encloses part of the gamma chain. F(1) is attached to F(0) by a central stalk formed by the gamma and epsilon chains, while a peripheral stalk is formed by the delta and b chains.

Its subcellular location is the cell inner membrane. Functionally, f(1)F(0) ATP synthase produces ATP from ADP in the presence of a proton or sodium gradient. F-type ATPases consist of two structural domains, F(1) containing the extramembraneous catalytic core and F(0) containing the membrane proton channel, linked together by a central stalk and a peripheral stalk. During catalysis, ATP synthesis in the catalytic domain of F(1) is coupled via a rotary mechanism of the central stalk subunits to proton translocation. Component of the F(0) channel, it forms part of the peripheral stalk, linking F(1) to F(0). This is ATP synthase subunit b from Ectopseudomonas mendocina (strain ymp) (Pseudomonas mendocina).